The primary structure comprises 84 residues: Glutaredoxin (84 aa).

The Glutaredoxin domain occupies methionine 1–alanine 84. Cysteine 12 and cysteine 15 are oxidised to a cystine.

Belongs to the glutaredoxin family. In terms of assembly, monomer.

The protein localises to the cytoplasm. Its function is as follows. Has a glutathione-disulfide oxidoreductase activity in the presence of NADPH and glutathione reductase. Reduces low molecular weight disulfides and proteins. In Pseudomonas aeruginosa (strain ATCC 15692 / DSM 22644 / CIP 104116 / JCM 14847 / LMG 12228 / 1C / PRS 101 / PAO1), this protein is Glutaredoxin (grx).